Here is a 355-residue protein sequence, read N- to C-terminus: tRNA-specific 2-thiouridylase MnmA (355 aa).

Residues 6–13 and Leu-33 contribute to the ATP site; that span reads LLSGGVDS. Cys-100 serves as the catalytic Nucleophile. Cys-100 and Cys-195 are disulfide-bonded. Gly-123 is a binding site for ATP. Residues 145–147 form an interaction with tRNA region; that stretch reads KDQ. The active-site Cysteine persulfide intermediate is Cys-195.

Belongs to the MnmA/TRMU family.

The protein resides in the cytoplasm. The catalysed reaction is S-sulfanyl-L-cysteinyl-[protein] + uridine(34) in tRNA + AH2 + ATP = 2-thiouridine(34) in tRNA + L-cysteinyl-[protein] + A + AMP + diphosphate + H(+). Functionally, catalyzes the 2-thiolation of uridine at the wobble position (U34) of tRNA, leading to the formation of s(2)U34. This Borrelia garinii subsp. bavariensis (strain ATCC BAA-2496 / DSM 23469 / PBi) (Borreliella bavariensis) protein is tRNA-specific 2-thiouridylase MnmA.